The following is a 353-amino-acid chain: Protein pelota homolog (353 aa).

The protein belongs to the eukaryotic release factor 1 family. Pelota subfamily. As to quaternary structure, monomer. The cofactor is a divalent metal cation.

It is found in the cytoplasm. In terms of biological role, may function in recognizing stalled ribosomes, interact with stem-loop structures in stalled mRNA molecules, and effect endonucleolytic cleavage of the mRNA. May play a role in the release non-functional ribosomes and degradation of damaged mRNAs. Has endoribonuclease activity. This Methanopyrus kandleri (strain AV19 / DSM 6324 / JCM 9639 / NBRC 100938) protein is Protein pelota homolog.